Here is a 295-residue protein sequence, read N- to C-terminus: CRISPR-associated endonuclease Cas1 2 (295 aa).

Residues Glu-155, His-215, and Glu-230 each coordinate Mn(2+).

The protein belongs to the CRISPR-associated endonuclease Cas1 family. In terms of assembly, homodimer, forms a heterotetramer with a Cas2 homodimer. It depends on Mg(2+) as a cofactor. Requires Mn(2+) as cofactor.

In terms of biological role, CRISPR (clustered regularly interspaced short palindromic repeat), is an adaptive immune system that provides protection against mobile genetic elements (viruses, transposable elements and conjugative plasmids). CRISPR clusters contain spacers, sequences complementary to antecedent mobile elements, and target invading nucleic acids. CRISPR clusters are transcribed and processed into CRISPR RNA (crRNA). Acts as a dsDNA endonuclease. Involved in the integration of spacer DNA into the CRISPR cassette. The chain is CRISPR-associated endonuclease Cas1 2 from Pyrobaculum aerophilum (strain ATCC 51768 / DSM 7523 / JCM 9630 / CIP 104966 / NBRC 100827 / IM2).